The chain runs to 264 residues: MAVVTMRELLDAGVHFGHQTRRWNPKMRRFIFTERNGIYIIDLQQTLTYIDQAFEFVKETVAHGGTVLFVGTKKQAQEAVQVEADRVGMPYVNHRWLGGMLTNFQTVSKRLNRMKELQAMDAAENGYEGRTKREVLMLTRERTKLERVLGGIAEMTRVPSALWIIDTNKEHIAVAEAHKLNIPVVAILDTNCDPDVVDFPVPGNDDAIRSTALLSRVISTAVEEGKKAREERQLAAAKDAAGDAKPEAEEAPVAAEAEEAPAAE.

Residues 225-264 (GKKAREERQLAAAKDAAGDAKPEAEEAPVAAEAEEAPAAE) are disordered.

Belongs to the universal ribosomal protein uS2 family.

The polypeptide is Small ribosomal subunit protein uS2 (Corynebacterium glutamicum (strain R)).